Here is a 352-residue protein sequence, read N- to C-terminus: Thiamine-phosphate synthase (352 aa).

Residues 1-128 form a unknown region; it reads MNPTPSETSL…AAEAAAIRYG (128 aa). The interval 63–85 is disordered; that stretch reads SYKQARSTSTDTGAGLKHPAQLD. The thiamine-phosphate synthase stretch occupies residues 129–352; the sequence is LYDLEVTCLN…LLQQLDQATI (224 aa). 4-amino-2-methyl-5-(diphosphooxymethyl)pyrimidine contacts are provided by residues 180 to 184 and Asn212; that span reads QYRCK. The Mg(2+) site is built by Asp213 and Asp232. 4-amino-2-methyl-5-(diphosphooxymethyl)pyrimidine-binding residues include Ser251 and Lys280. Residue Gly307 participates in 2-[(2R,5Z)-2-carboxy-4-methylthiazol-5(2H)-ylidene]ethyl phosphate binding.

It belongs to the thiamine-phosphate synthase family. The cofactor is Mg(2+).

The enzyme catalyses 2-[(2R,5Z)-2-carboxy-4-methylthiazol-5(2H)-ylidene]ethyl phosphate + 4-amino-2-methyl-5-(diphosphooxymethyl)pyrimidine + 2 H(+) = thiamine phosphate + CO2 + diphosphate. It catalyses the reaction 2-(2-carboxy-4-methylthiazol-5-yl)ethyl phosphate + 4-amino-2-methyl-5-(diphosphooxymethyl)pyrimidine + 2 H(+) = thiamine phosphate + CO2 + diphosphate. It carries out the reaction 4-methyl-5-(2-phosphooxyethyl)-thiazole + 4-amino-2-methyl-5-(diphosphooxymethyl)pyrimidine + H(+) = thiamine phosphate + diphosphate. The protein operates within cofactor biosynthesis; thiamine diphosphate biosynthesis; thiamine phosphate from 4-amino-2-methyl-5-diphosphomethylpyrimidine and 4-methyl-5-(2-phosphoethyl)-thiazole: step 1/1. Its function is as follows. Condenses 4-methyl-5-(beta-hydroxyethyl)thiazole monophosphate (THZ-P) and 2-methyl-4-amino-5-hydroxymethyl pyrimidine pyrophosphate (HMP-PP) to form thiamine monophosphate (TMP). In Synechococcus sp. (strain CC9605), this protein is Thiamine-phosphate synthase.